Here is a 117-residue protein sequence, read N- to C-terminus: Ig heavy chain V region 5-84 (117 aa).

Residues 1–19 (MNFGLSLIFLVLVLKGVLC) form the signal peptide. Positions 20 to 49 (EVKLVESGGGLVQPGGSLKLSCAASGFTFS) are framework-1. A disulfide bridge connects residues cysteine 41 and cysteine 115. The interval 50–54 (SYTMS) is complementarity-determining-1. The tract at residues 55–68 (WVRQTPEKRLEWVA) is framework-2. The complementarity-determining-2 stretch occupies residues 69–85 (YISNGGGSTYYPDTVKG). A framework-3 region spans residues 86-117 (RFTISRDNAKNNLYLQMSSLKSEDTAMYYCAR).

The sequence is that of Ig heavy chain V region 5-84 from Mus musculus (Mouse).